Reading from the N-terminus, the 245-residue chain is tRNA1(Val) (adenine(37)-N6)-methyltransferase (245 aa).

The protein belongs to the methyltransferase superfamily. tRNA (adenine-N(6)-)-methyltransferase family.

Its subcellular location is the cytoplasm. The enzyme catalyses adenosine(37) in tRNA1(Val) + S-adenosyl-L-methionine = N(6)-methyladenosine(37) in tRNA1(Val) + S-adenosyl-L-homocysteine + H(+). In terms of biological role, specifically methylates the adenine in position 37 of tRNA(1)(Val) (anticodon cmo5UAC). The polypeptide is tRNA1(Val) (adenine(37)-N6)-methyltransferase (Escherichia coli O157:H7).